A 299-amino-acid chain; its full sequence is Nicotinate-nucleotide pyrophosphorylase [carboxylating] (299 aa).

Positions 8–12 (HLLPP) are important for hexamer formation. Quinolinate-binding positions include Arg-102, 138–139 (RK), 160–161 (HR), Lys-171, Glu-201, Asp-222, 248–250 (SGG), and Gly-270. Position 291 is a phosphothreonine (Thr-291).

Belongs to the NadC/ModD family. In terms of assembly, hexamer formed by 3 homodimers.

It carries out the reaction nicotinate beta-D-ribonucleotide + CO2 + diphosphate = quinolinate + 5-phospho-alpha-D-ribose 1-diphosphate + 2 H(+). It functions in the pathway cofactor biosynthesis; NAD(+) biosynthesis; nicotinate D-ribonucleotide from quinolinate: step 1/1. Involved in the catabolism of quinolinic acid (QA). In Bos taurus (Bovine), this protein is Nicotinate-nucleotide pyrophosphorylase [carboxylating] (QPRT).